The chain runs to 47 residues: Ruminococcin-A (47 aa).

The signal sequence occupies residues 1-23 (MRNDVLTLTNPMEEKELEQILGG). Thr30 and Thr39 each carry 2,3-didehydrobutyrine. The beta-methyllanthionine (Thr-Cys) cross-link spans 30-35 (TISHEC). The segment at residues 32–46 (SHECNMNTWQFLFTC) is a cross-link (lanthionine (Ser-Cys)). The beta-methyllanthionine (Thr-Cys) cross-link spans 45 to 47 (TCC).

Maturation of lantibiotics involves the enzymatic conversion of Thr, and Ser into dehydrated AA and the formation of thioether bonds with cysteine. This is followed by membrane translocation and cleavage of the modified precursor. Post-translationally, it is not established whether the 2,3-didehydrobutyrine is the E- or Z-isomer.

It localises to the secreted. Functionally, lanthionine-containing peptide antibiotic (lantibiotic) active on Gram-positive bacteria. The bactericidal activity of lantibiotics is based on depolarization of energized bacterial cytoplasmic membranes, initiated by the formation of aqueous transmembrane pores. Ruminococcin A is a broad spectrum bacteriocin exhibiting activity against a wide range of pathogenic clostridia and B.longum. This chain is Ruminococcin-A (rumA1), found in Mediterraneibacter gnavus (Ruminococcus gnavus).